A 550-amino-acid polypeptide reads, in one-letter code: Vacuolar protein 8 (550 aa).

Residue Gly-2 is the site of N-myristoyl glycine attachment. 2 S-palmitoyl cysteine lipidation sites follow: Cys-4 and Cys-7. 8 ARM repeats span residues 75-114 (TEKD…NLAV), 116-155 (AENK…NLAT), 157-196 (DENK…NMTH), 198-237 (YENR…NIAV), 241-280 (HRKR…NLAS), 282-321 (ERYQ…NISI), 323-363 (PLNE…NLAA), and 454-493 (FIEC…QLLE). Position 548 is a phosphothreonine (Thr-548). Ser-550 bears the Phosphoserine mark.

Belongs to the beta-catenin family.

The protein resides in the golgi apparatus membrane. Its subcellular location is the vacuole membrane. Its function is as follows. Functions in both vacuole inheritance and protein targeting from the cytoplasm to vacuole. This Schizosaccharomyces pombe (strain 972 / ATCC 24843) (Fission yeast) protein is Vacuolar protein 8 (vac8).